We begin with the raw amino-acid sequence, 453 residues long: UDP-glycosyltransferase 79B3 (453 aa).

Residues serine 266, 325-327 (VQQ), 342-350 (HCGFGSMWE), and 364-367 (LGDQ) contribute to the UDP-alpha-D-glucose site.

This sequence belongs to the UDP-glycosyltransferase family.

The sequence is that of UDP-glycosyltransferase 79B3 (UGT79B3) from Arabidopsis thaliana (Mouse-ear cress).